The primary structure comprises 298 residues: Probable prolyl 4-hydroxylase 4 (298 aa).

Residues 1 to 6 lie on the Cytoplasmic side of the membrane; it reads MARRGL. Residues 7–25 traverse the membrane as a helical; Signal-anchor for type II membrane protein segment; sequence LISFFAIFSVLLQSSTSLI. At 26–298 the chain is on the lumenal side; it reads SSSSVFVNPS…GYCRRSCKAC (273 aa). N77 carries N-linked (GlcNAc...) asparagine glycosylation. Residues 120-245 form the Fe2OG dioxygenase domain; it reads NGEDIQVLRY…KWSATKWIHV (126 aa). Residues H138 and D140 each coordinate Fe cation. N164 carries N-linked (GlcNAc...) asparagine glycosylation. H226 lines the Fe cation pocket. K236 contacts 2-oxoglutarate. Residues N257 and N262 are each glycosylated (N-linked (GlcNAc...) asparagine). The 41-residue stretch at 258–298 folds into the ShKT domain; sequence CTDMNESCERWAVLGECTKNPEYMVGTTELPGYCRRSCKAC. 3 disulfide bridges follow: C258–C298, C265–C291, and C274–C295.

This sequence belongs to the P4HA family. The cofactor is Fe(2+). L-ascorbate serves as cofactor.

The protein localises to the endoplasmic reticulum membrane. It carries out the reaction L-prolyl-[collagen] + 2-oxoglutarate + O2 = trans-4-hydroxy-L-prolyl-[collagen] + succinate + CO2. In terms of biological role, catalyzes the post-translational formation of 4-hydroxyproline in -Xaa-Pro-Gly- sequences in proline-rich peptide sequences of plant glycoproteins and other proteins. Hydroxyprolines are important constituent of many plant cell wall glycoproteins such as extensins, hydroxyproline-rich glycoproteins, lectins and arabinogalactan proteins. The protein is Probable prolyl 4-hydroxylase 4 of Arabidopsis thaliana (Mouse-ear cress).